Consider the following 927-residue polypeptide: E3 ubiquitin-protein ligase HOS1 (927 aa).

The segment at 53–93 (CRATRDLASCGRFVNYVLNPCGHASLCTECCQRCDVCPICR) adopts an RING-type; degenerate zinc-finger fold. Disordered stretches follow at residues 678–699 (SGQFSEMEDASEGAKKSDLPDA), 782–806 (FKDLNRARGNSQLQGKRTEESSPEV), and 832–927 (VKSS…FAAR). Residues 797–806 (KRTEESSPEV) are compositionally biased toward basic and acidic residues. 2 stretches are compositionally biased toward polar residues: residues 832–851 (VKSSSNHLNGSSQKPESTFF) and 878–892 (NNNNVLATESRNNSG). Over residues 917–927 (KGRRRRRFAAR) the composition is skewed to basic residues.

In terms of assembly, interacts with SCRM/ICE1, FLK and MSI4/FVE. Ubiquitously expressed with higher levels in leaf vasculature, roots and root tips.

It localises to the nucleus. The protein resides in the cytoplasm. It catalyses the reaction S-ubiquitinyl-[E2 ubiquitin-conjugating enzyme]-L-cysteine + [acceptor protein]-L-lysine = [E2 ubiquitin-conjugating enzyme]-L-cysteine + N(6)-ubiquitinyl-[acceptor protein]-L-lysine.. Its pathway is protein modification; protein ubiquitination. Its function is as follows. E3 ubiquitin-protein ligase that mediates ubiquitination and subsequent proteasomal degradation of the transcription factor ICE1. Acts as a negative regulator of cold signaling pathways. Probably involved in recruiting the NUP107-160 subcomplex of the nuclear pore complex to chromatin. Controls flowering time in response to ambient temperatures (16 and 23 degrees Celsius) and intermittent cold, probably via the regulation of FT and TSF levels. The sequence is that of E3 ubiquitin-protein ligase HOS1 (HOS1) from Arabidopsis thaliana (Mouse-ear cress).